Here is a 783-residue protein sequence, read N- to C-terminus: Transcription factor E4F1 (783 aa).

Residues 40–84 (GFLGLPAPFSEEDEDDVHRCGRCQVEFTALEDFVQHKIQKTCHRA) form a required for ubiquitin ligase activity region. Ser-49 bears the Phosphoserine mark. The interval 185–264 (LLVNKEGRYV…GKSFRESGAL (80 aa)) is mediates dimerization, DNA-binding, transcription repression of CCNA2 and interaction with HMGA2. 2 C2H2-type zinc fingers span residues 193-215 (YVCMLCHKTFKTGSILKAHMVTH) and 221-243 (HECKLCGASFRTKGSLIRHHRRH). The C2H2-type 3; degenerate zinc finger occupies 249–273 (YKCAKCGKSFRESGALTRHLKSLTP). Residues 368 to 565 (NLLHQAMQNS…REKGSLVRHV (198 aa)) are mediates interaction with CDKN2A. The tract at residues 386 to 407 (GEESALEPAPPSGSSPQCLGDG) is disordered. C2H2-type zinc fingers lie at residues 434–456 (HPCPQCSETFPTAATLEAHKRGH), 462–484 (FTCTQCGKAFPKAYLLKKHQEVH), 490–512 (FRCGDCGKLYKTIAHVRGHRRVH), 518–540 (FPCPQCGKRYKTKNAQQVHFRTH), and 546–568 (HVCQFCSRGFREKGSLVRHVRHH). The tract at residues 434-598 (HPCPQCSETF…LNRHLRTKGG (165 aa)) is interaction with BMI1. The tract at residues 520-579 (CPQCGKRYKTKNAQQVHFRTHLEEKPHVCQFCSRGFREKGSLVRHVRHHTGEKPFKCYKC) is mediates interaction with TP53. A C2H2-type 9; degenerate zinc finger spans residues 574–596 (FKCYKCGRGFAEHGTLNRHLRTK). The mediates interaction with RASSF1 stretch occupies residues 574–596 (FKCYKCGRGFAEHGTLNRHLRTK).

In terms of assembly, homodimer; binds DNA as a dimer. Forms a complex with CDKN2A and TP53. Interacts with HDAC1, HMGA2 and RASSF1. Interactions with TP53, RB1, ANP32A and probably BMI1 and FHL2 regulate E4F1 activity. In terms of processing, phosphorylated; phosphorylation is cell cycle-dependent and regulates DNA-binding activity and function. Post-translationally, may be sumoylated by UBE2I upon interaction with CDKN2A. Ubiquitously expressed.

Its subcellular location is the nucleus. It localises to the nucleoplasm. The protein localises to the cytoplasm. It carries out the reaction S-ubiquitinyl-[E2 ubiquitin-conjugating enzyme]-L-cysteine + [acceptor protein]-L-lysine = [E2 ubiquitin-conjugating enzyme]-L-cysteine + N(6)-ubiquitinyl-[acceptor protein]-L-lysine.. Its pathway is protein modification; protein ubiquitination. May function as a transcriptional repressor. May also function as a ubiquitin ligase mediating ubiquitination of chromatin-associated TP53. Functions in cell survival and proliferation through control of the cell cycle. Functions in the p53 and pRB tumor suppressor pathways and regulates the cyclin CCNA2 transcription. The polypeptide is Transcription factor E4F1 (E4f1) (Mus musculus (Mouse)).